A 406-amino-acid chain; its full sequence is telomere-associated protein 1 (406 aa).

Residues 20-40 are compositionally biased toward basic and acidic residues; sequence EHHNGSHDNDDKDKEDKEKQN. The interval 20–46 is disordered; the sequence is EHHNGSHDNDDKDKEDKEKQNTEAVAA. The region spanning 147-206 is the HTH myb-type domain; that stretch reads TTRRVRLRWTQEETADLMEGCKVHGVGNWKKILTDPRFRFNNRTAVDLKDRFRTCFPEDY. The H-T-H motif DNA-binding region spans 175 to 202; that stretch reads WKKILTDPRFRFNNRTAVDLKDRFRTCF. Positions 234–288 constitute a Myb-like domain; that stretch reads VNRKERRVFTPEEDERLLNGFMKHGPSWSNIQRDNELGLFERRSTDLRDRFRNAF. Positions 368–389 are disordered; the sequence is TQELQPQAHSRKQQGGDGLKEE.

It is found in the nucleus. The protein localises to the chromosome. Its subcellular location is the telomere. Functionally, telomere-binding protein that mediates telomere clustering by promoting formation of head-to-head dimers of DNA molecules through the telomeric tracts. Binds specifically 5'-TTAGTCAGGG-3' repeats in subtelomeric regions. This chain is telomere-associated protein 1, found in Yarrowia lipolytica (strain CLIB 122 / E 150) (Yeast).